The chain runs to 59 residues: Large ribosomal subunit protein bL32C (59 aa).

It belongs to the bacterial ribosomal protein bL32 family.

The polypeptide is Large ribosomal subunit protein bL32C (rpmF3) (Enterococcus faecalis (strain ATCC 700802 / V583)).